The sequence spans 223 residues: Serine/threonine/tyrosine-interacting protein (223 aa).

A Tyrosine-protein phosphatase domain is found at 28–176; it reads EMQEILPGLF…LQEYEAIYLA (149 aa). Positions 76 to 78 match the Interaction with FBXW7 motif; that stretch reads FQQ. Residues Ser184, Ser193, and Ser201 each carry the phosphoserine modification. The segment at 197–223 is disordered; it reads GTTGSLKRTHEEEDDFGTMQVATAQNG.

The protein belongs to the protein-tyrosine phosphatase family. Non-receptor class subfamily. As to quaternary structure, interacts with MAPK1; independently of MAPK1 phosphorylation status. Interacts with CARHSP1/Crhsp-24. Interacts (via FQQ motif) with FBXW7 isoforms 1 (via F-box domain) and 3 (via F-box domain); the interaction is direct and prevents FBXW7 interaction with SKP1, a component of the SCF(FBXW7) complex. Does not interact with FBXW7 isoform 2.

It localises to the nucleus. The protein localises to the cytoplasm. It is found in the cytosol. Catalytically inactive phosphatase. Acts as a nuclear anchor for MAPK1/MAPK3 (ERK1/ERK2). Modulates cell-fate decisions and cell migration by spatiotemporal regulation of MAPK1/MAPK3 (ERK1/ERK2). By binding to the F-box of FBXW7, prevents the assembly of FBXW7 into the SCF E3 ubiquitin-protein ligase complex, and thereby inhibits degradation of its substrates. Plays a role in spermatogenesis. The protein is Serine/threonine/tyrosine-interacting protein of Homo sapiens (Human).